A 505-amino-acid chain; its full sequence is Pentatricopeptide repeat-containing protein At2g17033 (505 aa).

PPR repeat units follow at residues 243 to 277 (KTQA…KIKP), 278 to 312 (GLFE…GHKI), and 313 to 347 (DTVC…NVPF). The region spanning 413-503 (LDLHGMHLSS…AKGKTVKEWL (91 aa)) is the Smr domain.

The protein belongs to the PPR family. P subfamily.

This chain is Pentatricopeptide repeat-containing protein At2g17033, found in Arabidopsis thaliana (Mouse-ear cress).